A 133-amino-acid chain; its full sequence is MANHDPISDMLTRIRNASQKRHENTRIPASRMSRSIAKVLQNEGFISQVSEEGEGVKTQLVLELKYSGKHRHPTIRSMKRVSKPGLRIYKNNRGLPKVLGGLGVAIISTSKGVMSDRDARKQGVGGEVLCYVY.

The protein belongs to the universal ribosomal protein uS8 family. As to quaternary structure, part of the 30S ribosomal subunit. Contacts proteins S5 and S12.

In terms of biological role, one of the primary rRNA binding proteins, it binds directly to 16S rRNA central domain where it helps coordinate assembly of the platform of the 30S subunit. The chain is Small ribosomal subunit protein uS8 from Prochlorococcus marinus (strain SARG / CCMP1375 / SS120).